We begin with the raw amino-acid sequence, 35 residues long: Photosystem II reaction center protein M (35 aa).

The helical transmembrane segment at 7–27 (GFIATILFVLVPTVFLLILYI) threads the bilayer.

The protein belongs to the PsbM family. In terms of assembly, PSII is composed of 1 copy each of membrane proteins PsbA, PsbB, PsbC, PsbD, PsbE, PsbF, PsbH, PsbI, PsbJ, PsbK, PsbL, PsbM, PsbT, PsbX, PsbY, PsbZ, Psb30/Ycf12, peripheral proteins PsbO, CyanoQ (PsbQ), PsbU, PsbV and a large number of cofactors. It forms dimeric complexes.

The protein localises to the cellular thylakoid membrane. One of the components of the core complex of photosystem II (PSII). PSII is a light-driven water:plastoquinone oxidoreductase that uses light energy to abstract electrons from H(2)O, generating O(2) and a proton gradient subsequently used for ATP formation. It consists of a core antenna complex that captures photons, and an electron transfer chain that converts photonic excitation into a charge separation. This subunit is found at the monomer-monomer interface. The chain is Photosystem II reaction center protein M from Crocosphaera subtropica (strain ATCC 51142 / BH68) (Cyanothece sp. (strain ATCC 51142)).